The sequence spans 317 residues: Secreted mono- and diacylglycerol lipase 3 (317 aa).

Residues 1–29 form the signal peptide; the sequence is MMFADDLVRMAVLRFITVALAAITNVANA. Cys61 and Cys310 are oxidised to a cystine. Asn108 carries N-linked (GlcNAc...) asparagine glycosylation. Ser175 serves as the catalytic Nucleophile. N-linked (GlcNAc...) asparagine glycosylation occurs at Asn194. Residue Asp234 is part of the active site. N-linked (GlcNAc...) asparagine glycosylation occurs at Asn258. His294 is an active-site residue.

Belongs to the AB hydrolase superfamily. Lipase family. Class 3 subfamily.

It localises to the secreted. It carries out the reaction a monoacylglycerol + H2O = glycerol + a fatty acid + H(+). The enzyme catalyses a diacylglycerol + H2O = a monoacylglycerol + a fatty acid + H(+). In terms of biological role, secreted mono- and diacylglycerol lipase involved in plant virulence. Has a substrate preference for p-nitrophenyl esters with a carbon chain length of C10 (p-nitrophenyl caprate). In Gibberella zeae (strain ATCC MYA-4620 / CBS 123657 / FGSC 9075 / NRRL 31084 / PH-1) (Wheat head blight fungus), this protein is Secreted mono- and diacylglycerol lipase 3.